Consider the following 338-residue polypeptide: MAEAFTTVPAKSSPARFRYTKANPVKDPTTSFAGKTILITGPNAGLGFEAATKFARLGASKLIFGVRSLERGQEAKTKIEQLTKCKRDAIQLVQLDMGSYASIEKFAKSVTDEFPVIHAAVLNAGVAPPSYKLSQEGWEMSLQVNVISTAYLAILLLPKLRESGRAIGEPAYLEFVSSTGHGDVTTESVRDGKSILKKVNDPANFKFTAQYQITKLLEIWAMEHIAAKTSPKEVIVNSACPGLCKSSIGRDFGIVLRGLDAVFKGIFAQTAEAGSRILVSAVTAGTDSHGGFWALDAVSVPGELVTSDEGKALSKQFWAEVLDVLRKQNADVEAILNG.

Residues L46, R71, D96, and N123 each contribute to the NADP(+) site. Residue S177 is the Proton donor of the active site. Residues Y211 and K215 each contribute to the NADP(+) site. Y211 acts as the Proton acceptor in catalysis. The Lowers pKa of active site Tyr role is filled by K215.

This sequence belongs to the short-chain dehydrogenases/reductases (SDR) family.

Its pathway is mycotoxin biosynthesis. Short-chain dehydrogenase/reductase; part of the gene cluster that mediates the biosynthesis of the mycotoxins phomacins, leucine-derived cytochalasans with potent actin polymerization-inhibitory activities and monocot-specific antigerminative activities. The first step in the pathway is catalyzed by the hybrid PKS-NRPS phmA, assisted by the enoyl reductase phmE, that are responsible for fusion of the leucine precursor and the polyketide backbone to produce a 2-pyrrolidone intermediate. The polyketide synthase module (PKS) of phmA is responsible for the synthesis of the polyketide backbone and the downstream nonribosomal peptide synthetase (NRPS) amidates the carboxyl end of the polyketide with the leucine precursor. Because phmA lacks a designated enoylreductase (ER) domain, the required activity is provided the enoyl reductase phmE. Reduction by the hydrolyase phmG, followed by dehydration and intra-molecular Diels-Alder cyclization by the Diels-Alderase phmD then yield the required isoindolone-fused macrocycle. A number of oxidative steps catalyzed by the tailoring cytochrome P450 monooxygenase phmB, the FAD-linked oxidoreductase phmC and the short-chain dehydrogenase/reductase phmF, are further required to afford the final products, phomacin D and phomacin E. The sequence is that of Short-chain dehydrogenase/reductase phmF from Phaeosphaeria nodorum (strain SN15 / ATCC MYA-4574 / FGSC 10173) (Glume blotch fungus).